The sequence spans 220 residues: 3-keto-L-gulonate-6-phosphate decarboxylase SgbH (220 aa).

D11 is a binding site for substrate. Mg(2+)-binding residues include E33 and D62. R192 lines the substrate pocket.

The protein belongs to the HPS/KGPDC family. KGPDC subfamily. Homodimer. Mg(2+) is required as a cofactor.

It carries out the reaction 3-dehydro-L-gulonate 6-phosphate + H(+) = L-xylulose 5-phosphate + CO2. Functionally, catalyzes the decarboxylation of 3-keto-L-gulonate-6-P into L-xylulose-5-P. May be involved in the utilization of 2,3-diketo-L-gulonate. This Escherichia coli (strain K12) protein is 3-keto-L-gulonate-6-phosphate decarboxylase SgbH (sgbH).